Here is a 364-residue protein sequence, read N- to C-terminus: Probable secreted lipase phiG (364 aa).

Residues 1–18 form the signal peptide; it reads MMPFMDLILSILVSSVLL. Asn-49 is a glycosylation site (N-linked (GlcNAc...) asparagine). Residue Ser-203 is the Nucleophile of the active site. A glycan (N-linked (GlcNAc...) asparagine) is linked at Asn-262.

This sequence belongs to the AB hydrolase superfamily.

It localises to the secreted. It catalyses the reaction a carboxylic ester + H2O = an alcohol + a carboxylate + H(+). Its function is as follows. Part of the gene cluster that mediates the biosynthesis of the antihypercholesterolemic agents phomoidrides which are dimeric anhydrides. The function of phiG within the pathway has still to be determined. The pathway begins with the highly reducing polyketide synthase phiA that catalyzes the formation of a C12-fatty acyl-ACP, starting from one acetate and 5 malonate units. The hydrolase phiM is involved in the release of the C12-fatty acyl chain from phiA. The alkylcitrate synthase (ACS) phiJ and the alkylcitrate dehydratase (ACDH) phiI then give rise to decarboxylated monomeric anhydrides by coupling the C12-fatty acyl chain with oxalacetic acid. The cyclase phiC is responsible for the dimerization of the monomeric anhydrides which leads to the production of prephomoidride that contains the characteristic bicyclo[4.3.1]deca-1,6-diene system of phomoidrides. Iterative oxidation catalyzed by the alpha-ketoglutarate-dependent dioxygenase phiK produced then phomoidride A. Finally, the methyltransferase phiE converts phomoidride A to phomoidride B via an acetalization reaction. The phosphatidylethanolamine-binding protein phiB and phiN are not essential for dimerization and their functions have still to be determined. The protein is Probable secreted lipase phiG of Fungal sp. (strain ATCC 74256).